Here is a 336-residue protein sequence, read N- to C-terminus: Phytochrome A-associated F-box protein (336 aa).

In terms of domain architecture, F-box spans 3-55 (ESVFSCIPEDVVFNIFFKLQDDPRNWARLACVCTKFSSIVRNVCCKTQCYSAI). Positions 197–201 (RKRRK) match the Nuclear localization signal motif.

As to quaternary structure, probable component of an E3 ubiquitin ligase SCF complex. Interacts with SKP1A/ASK1 and SKP1B/ASK2.

It is found in the nucleus. The protein operates within protein modification; protein ubiquitination. Functionally, component of SCF(ASK-cullin-F-box) E3 ubiquitin ligase complexes, which may mediate the ubiquitination and subsequent proteasomal degradation of target proteins. Negative regulator of the phyA signaling pathway that shifts the responsiveness of the phyA signaling system associated with hypocotyl elongation from red to far-red wavelength. The protein is Phytochrome A-associated F-box protein (EID1) of Arabidopsis thaliana (Mouse-ear cress).